The primary structure comprises 266 residues: Undecaprenyl-diphosphatase (266 aa).

8 helical membrane-spanning segments follow: residues 2 to 22 (INILNAIILGIVQGITEFLPI), 39 to 59 (LPIIFDIYLHLATVLVIIIYY), 86 to 106 (LKLILLILIITIVTGVVGTFI), 112 to 132 (MFILPFILINFIITGILILML), 145 to 165 (ILLVGIFIGLMQGLGAFPGIS), 184 to 204 (AFEISFLSLIPIVFGAILFKY), 212 to 232 (MVLNFFEINLGALVAFVVGII), and 246 to 266 (LYYFSIYLFALSITFCCFFRI).

This sequence belongs to the UppP family.

It localises to the cell inner membrane. It catalyses the reaction di-trans,octa-cis-undecaprenyl diphosphate + H2O = di-trans,octa-cis-undecaprenyl phosphate + phosphate + H(+). Functionally, catalyzes the dephosphorylation of undecaprenyl diphosphate (UPP). Confers resistance to bacitracin. This Borrelia garinii subsp. bavariensis (strain ATCC BAA-2496 / DSM 23469 / PBi) (Borreliella bavariensis) protein is Undecaprenyl-diphosphatase.